A 467-amino-acid polypeptide reads, in one-letter code: MNTVRSEKDSMGAIDVPADKLWGAQTQRSLEHFRISTEKMPTSLIHALALTKRAAAKVNEDLDLLSEEKASAIRQAADEVLAGQHDDEFPLAIWQTGSGTQSNMNMNEVLANRASELLGGVRGMERKVHPNDDVNKSQSSNDVFPTAMHVAALLALRKQLIPQLKTLTQTLSEKSRAFADIVKIGRTHLQDATPLTLGQEISGWVAMLEHNLKHIEYSLPHVAELALGGTAVGTGLNTHPEYARRVADELAVITCAPFVTAPNKFEALATCDALVQAHGALKGLAASLMKIANDVRWLASGPRCGIGEISIPENEPGSSIMPGKVNPTQCEALTMLCCQVMGNDVAINMGGASGNFELNVFRPMVIHNFLQSVRLLADGMESFNKHCAVGIEPNRERINQLLNESLMLVTALNTHIGYDKAAEIAKKAHKEGLTLKAAALALGYLSEAEFDSWVRPEQMVGSMKAGR.

Residues 98–100, Arg-126, 129–132, 139–141, and Thr-187 contribute to the substrate site; these read SGT, HPND, and SSN. The active-site Proton donor/acceptor is His-188. Ser-318 is an active-site residue. Substrate is bound by residues Ser-319 and 324–326; that span reads KVN.

Belongs to the class-II fumarase/aspartase family. Fumarase subfamily. Homotetramer.

The protein localises to the cytoplasm. The catalysed reaction is (S)-malate = fumarate + H2O. Its pathway is carbohydrate metabolism; tricarboxylic acid cycle; (S)-malate from fumarate: step 1/1. In terms of biological role, involved in the TCA cycle. Catalyzes the stereospecific interconversion of fumarate to L-malate. The polypeptide is Fumarate hydratase class II (Shigella flexneri).